Consider the following 169-residue polypeptide: Protein UL138 (169 aa).

A helical transmembrane segment spans residues 8-28 (VGLPIIGVMLVLIVAILCYLA). The segment at 109 to 133 (DRRAGSSSSSSVHVANQRNSVPPPD) is disordered.

As to quaternary structure, interacts with host TNFR1. Interacts with host MRP1. Interacts with host UAF1/WDR48. Interacts with host STING1.

The protein resides in the host Golgi apparatus membrane. Functionally, plays an important role in the establishment of latent viral infection. Modulates the expression of several host cell surface receptors such as TNFR1, CD36 or the MRP1 transporter during productive infection. For instance, associates with host MRP1 and induces its lysosomal degradation. Plays an inhibitory role in the host cGAS/STING/TBK1 pathway and upstream of IRF3 phosphorylation and NF-kappa-B leading to inhibition of interferon beta production during both lytic and latent infections. Also participates in the establishment of latency by sustaining an innate immune response through phosphorylation and activation of host STAT1. The chain is Protein UL138 (UL138) from Human cytomegalovirus (strain Merlin) (HHV-5).